The chain runs to 400 residues: Glycerol-3-phosphate dehydrogenase [NAD(+)] 1, chloroplastic (400 aa).

Residues 1 to 32 (MRFRSFFFSSSIFSLSHSRSPSLSSSRFSSLS) constitute a chloroplast transit peptide. NAD(+) is bound by residues 61–66 (GSGNWG), Phe92, Phe149, Lys172, and Ala205. Residue Lys172 participates in substrate binding. The Proton acceptor role is filled by Lys257. Residues Arg321, Lys350, and Gln352 each coordinate NAD(+). Substrate is bound at residue 321–322 (RN).

It belongs to the NAD-dependent glycerol-3-phosphate dehydrogenase family. Expressed in young seedlings, flowers and siliques. Expressed at low levels in roots.

The protein localises to the plastid. It is found in the chloroplast. It catalyses the reaction sn-glycerol 3-phosphate + NAD(+) = dihydroxyacetone phosphate + NADH + H(+). It participates in membrane lipid metabolism; glycerophospholipid metabolism. In terms of biological role, involved in glycerolipid metabolism. This chain is Glycerol-3-phosphate dehydrogenase [NAD(+)] 1, chloroplastic (DHAPRD), found in Arabidopsis thaliana (Mouse-ear cress).